We begin with the raw amino-acid sequence, 821 residues long: MVSSVLEVSYVFCCPNRARGALSWNSGPGGLLAFGTSCSVVLYDPQKKVVITNLNGHTARVNCLHWIRTEDGSPSTELVSGASDNRVIHWELENNQVLKSVRLQGHEGPVYAVHGIYQSGPSDGEQHALIASAASDSTVRLWSKKGSEVKCLQILKFGDGFVLTVCLSTLPDTDAPVLACGDDGGRIHLFVQQDDWFQKMLSLCGHEDWIRGVEWATFGRDLFLASCSQDCLIRIWRLYMKPTSLETEDGSIRLKENTFTIKDGGVSTTVAVILETVLAGHENWVNAIHWQPSFYKDGVLHQPVRLLSASMDKTMILWAPDEESGVWLEQVRVGEVGGNTLGFYGCQFGENGSMIIAHAFHGAMHLWKQSTVNPRQWAPEIVISGHFDGVQDLIWDPEGEFIITTSTDQTTRLFAPWKKKNQSQVTWHEIARPQIHGYNLKCLAMIDRFQFVSGADEKVLRVFSAPRNFVENFSVISRQSLSHMLYDEDNDLPEGATVPALGLSNKAVFEGDMTYLTSEEEELLSPAFGYPQVIFQPAVLSEPPTEDHLLQNTLWPEVQKLYGHGYEIFCVTCNNSKTLLASACKAAQKEHAAIILWSTTSWKQVQSLAYHTLTVTQMAFSPDDKFLLAVSRDRTWSLWKRQDVTSAEFDPFFSLFAFTNKITSVHSRIIWSCDWSPDSKYFFTGSRDKKVVVWGECNSSYNPMEHPINPCSSILDVGSCVTAVSVCPVLNPAQRYIVAVGLESGKICIYSWSKTNQETKDWTSCVETTPSQSHTLGIRRLCWKSCSGSTEQSEEGTEWLDFASCGEDHTVKIYRVNRCAL.

WD repeat units lie at residues 56 to 100, 105 to 152, 160 to 200, 205 to 246, 280 to 328, 338 to 377, 385 to 424, 435 to 473, 563 to 607, 610 to 649, 665 to 704, 716 to 760, and 773 to 821; these read GHTA…VLKS, GHEG…VKCL, GFVL…FQKM, GHED…TSLE, GHEN…GVWL, GNTLGFYGCQFGENGSMIIAHAFHGAMHLWKQSTVNPRQW, GHFDGVQDLIWDPEGEFIITTSTDQTTRLFAPWKKKNQSQ, IHGYNLKCLAMIDRFQFVSGADEKVLRVFSAPRNFVENF, GHGY…QVQS, YHTLTVTQMAFSPDDKFLLAVSRDRTWSLWKRQDVTSAEF, VHSRIIWSCDWSPDSKYFFTGSRDKKVVVWGECNSSYNPM, DVGS…QETK, and SHTL…RCAL.

The protein belongs to the WD repeat ELP2 family. As to quaternary structure, component of the elongator complex which consists of ELP1, ELP2, ELP3, ELP4, ELP5 and ELP6. Interacts with STAT3 and JAKs.

The protein localises to the cytoplasm. It is found in the nucleus. It participates in tRNA modification; 5-methoxycarbonylmethyl-2-thiouridine-tRNA biosynthesis. Functionally, component of the elongator complex which is required for multiple tRNA modifications, including mcm5U (5-methoxycarbonylmethyl uridine), mcm5s2U (5-methoxycarbonylmethyl-2-thiouridine), and ncm5U (5-carbamoylmethyl uridine). The elongator complex catalyzes the formation of carboxymethyluridine in the wobble base at position 34 in tRNAs. In Rattus norvegicus (Rat), this protein is Elongator complex protein 2 (Elp2).